Reading from the N-terminus, the 297-residue chain is Homoserine kinase (297 aa).

82 to 92 (PLTRGLGSSAS) is an ATP binding site.

The protein belongs to the GHMP kinase family. Homoserine kinase subfamily.

The protein resides in the cytoplasm. It catalyses the reaction L-homoserine + ATP = O-phospho-L-homoserine + ADP + H(+). Its pathway is amino-acid biosynthesis; L-threonine biosynthesis; L-threonine from L-aspartate: step 4/5. Catalyzes the ATP-dependent phosphorylation of L-homoserine to L-homoserine phosphate. The polypeptide is Homoserine kinase (Bacillus cereus (strain AH187)).